Consider the following 421-residue polypeptide: 4-hydroxy-3-methylbut-2-en-1-yl diphosphate synthase (flavodoxin) (421 aa).

Cys311, Cys314, Cys357, and Glu364 together coordinate [4Fe-4S] cluster.

Belongs to the IspG family. Requires [4Fe-4S] cluster as cofactor.

The catalysed reaction is (2E)-4-hydroxy-3-methylbut-2-enyl diphosphate + oxidized [flavodoxin] + H2O + 2 H(+) = 2-C-methyl-D-erythritol 2,4-cyclic diphosphate + reduced [flavodoxin]. It functions in the pathway isoprenoid biosynthesis; isopentenyl diphosphate biosynthesis via DXP pathway; isopentenyl diphosphate from 1-deoxy-D-xylulose 5-phosphate: step 5/6. Its function is as follows. Converts 2C-methyl-D-erythritol 2,4-cyclodiphosphate (ME-2,4cPP) into 1-hydroxy-2-methyl-2-(E)-butenyl 4-diphosphate. The sequence is that of 4-hydroxy-3-methylbut-2-en-1-yl diphosphate synthase (flavodoxin) from Xanthomonas axonopodis pv. citri (strain 306).